Reading from the N-terminus, the 695-residue chain is Protein ACTIVITY OF BC1 COMPLEX KINASE 7, chloroplastic (695 aa).

The Protein kinase domain occupies 259 to 589 (EFEEQPIAAA…VQEIRKQADD (331 aa)). Residues 265 to 273 (IAAASLGQV) and Lys287 each bind ATP. Asp421 (proton acceptor) is an active-site residue. Helical transmembrane passes span 633–653 (TILQMATMYTVLGGTLLNIGV) and 659–679 (GSQLVANGSFIGAGIFMLLVL).

The protein belongs to the protein kinase superfamily. ADCK protein kinase family. Mostly expressed in leaves and flowers, and, to a lower extent, in roots.

The protein localises to the plastid. Its subcellular location is the chloroplast thylakoid membrane. It localises to the chloroplast. It is found in the plastoglobule. The catalysed reaction is L-seryl-[protein] + ATP = O-phospho-L-seryl-[protein] + ADP + H(+). It carries out the reaction L-threonyl-[protein] + ATP = O-phospho-L-threonyl-[protein] + ADP + H(+). Its function is as follows. Involved in resistance to oxidative stress. Influences responses to reactive oxygen species (ROS) production. Regulates plastoglobules formation in thylakoids. Together with OSA1, regulates iron distribution within the chloroplast and mediates the oxidative stress response. Together with ABC1K8, influences chloroplast lipid synthesis/accumulation and modulates chloroplast membrane composition in response to stress. The chain is Protein ACTIVITY OF BC1 COMPLEX KINASE 7, chloroplastic from Arabidopsis thaliana (Mouse-ear cress).